Reading from the N-terminus, the 338-residue chain is Phosphate acyltransferase (338 aa).

The protein belongs to the PlsX family. Homodimer. Probably interacts with PlsY.

Its subcellular location is the cytoplasm. It catalyses the reaction a fatty acyl-[ACP] + phosphate = an acyl phosphate + holo-[ACP]. It functions in the pathway lipid metabolism; phospholipid metabolism. Functionally, catalyzes the reversible formation of acyl-phosphate (acyl-PO(4)) from acyl-[acyl-carrier-protein] (acyl-ACP). This enzyme utilizes acyl-ACP as fatty acyl donor, but not acyl-CoA. This chain is Phosphate acyltransferase, found in Salinibacter ruber (strain DSM 13855 / M31).